The sequence spans 479 residues: ATP synthase subunit beta (479 aa).

153 to 160 (GGAGVGKT) provides a ligand contact to ATP.

It belongs to the ATPase alpha/beta chains family. In terms of assembly, F-type ATPases have 2 components, CF(1) - the catalytic core - and CF(0) - the membrane proton channel. CF(1) has five subunits: alpha(3), beta(3), gamma(1), delta(1), epsilon(1). CF(0) has three main subunits: a(1), b(2) and c(9-12). The alpha and beta chains form an alternating ring which encloses part of the gamma chain. CF(1) is attached to CF(0) by a central stalk formed by the gamma and epsilon chains, while a peripheral stalk is formed by the delta and b chains.

Its subcellular location is the cell membrane. The catalysed reaction is ATP + H2O + 4 H(+)(in) = ADP + phosphate + 5 H(+)(out). With respect to regulation, increases 2-fold following exposure to low pH. Produces ATP from ADP in the presence of a proton gradient across the membrane. The catalytic sites are hosted primarily by the beta subunits. In Lactobacillus acidophilus (strain ATCC 700396 / NCK56 / N2 / NCFM), this protein is ATP synthase subunit beta.